A 256-amino-acid chain; its full sequence is UPF0246 protein SPO0106 (256 aa).

This sequence belongs to the UPF0246 family.

The chain is UPF0246 protein SPO0106 from Ruegeria pomeroyi (strain ATCC 700808 / DSM 15171 / DSS-3) (Silicibacter pomeroyi).